The sequence spans 917 residues: Glutamate receptor (917 aa).

The N-terminal stretch at 1 to 19 is a signal peptide; that stretch reads MDTCVFPLVVLWISMRITS. Topologically, residues 20–556 are extracellular; that stretch reads TLDEVPIGGI…HFFSFMEPLS (537 aa). 12 N-linked (GlcNAc...) asparagine glycosylation sites follow: asparagine 62, asparagine 95, asparagine 121, asparagine 125, asparagine 229, asparagine 251, asparagine 261, asparagine 272, asparagine 418, asparagine 419, asparagine 424, and asparagine 491. Residues 557 to 577 traverse the membrane as a helical segment; that stretch reads SEIWMCIVFAYIGVSVVLFLV. Residues 578–631 lie on the Cytoplasmic side of the membrane; sequence SRFSPNEWHLSEAHHSYIANDFSISNSLWFSLGAFMQQGCDISPRSMSGRIVGS. Residues 632-652 traverse the membrane as a helical segment; it reads VWWFFTLIIISSYTANLAAFL. Over 653–818 the chain is Extracellular; that stretch reads TVERMLTPID…GAQSALTLAN (166 aa). Asparagine 775 carries an N-linked (GlcNAc...) asparagine glycan. Residues 819–839 traverse the membrane as a helical segment; sequence VAGIFYILIGGLVVAVLSAAF. The Cytoplasmic portion of the chain corresponds to 840–917; that stretch reads EFLYKSRMDS…FEDSNTHTEV (78 aa). Positions 871 to 896 are disordered; that stretch reads HIDSEQKTTGNGTRRRSHNSVTYTYT.

The protein belongs to the glutamate-gated ion channel (TC 1.A.10.1) family.

The protein localises to the cell membrane. Its subcellular location is the postsynaptic cell membrane. Functionally, receptor for glutamate. L-glutamate acts as an excitatory neurotransmitter at many synapses in the central nervous system. The postsynaptic actions of Glu are mediated by a variety of receptors. This is Glutamate receptor from Lymnaea stagnalis (Great pond snail).